The primary structure comprises 560 residues: Eukaryotic translation initiation factor 3 subunit D-1 (560 aa).

The tract at residues 98–166 (VQKPPHQRGR…RGPPPKMRES (69 aa)) is disordered. A compositionally biased stretch (basic residues) spans 100–121 (KPPHQRGRFRNMRNSRSGRGRN). Residue Thr128 is modified to Phosphothreonine. Positions 147–156 (GRGMGKKFGH) are enriched in basic residues. The tract at residues 291–305 (EFDLLTVNESSVEPP) is RNA gate.

This sequence belongs to the eIF-3 subunit D family. Component of the eukaryotic translation initiation factor 3 (eIF-3) complex. The eIF-3 complex interacts with pix.

The protein resides in the cytoplasm. Its function is as follows. mRNA cap-binding component of the eukaryotic translation initiation factor 3 (eIF-3) complex, which is involved in protein synthesis of a specialized repertoire of mRNAs and, together with other initiation factors, stimulates binding of mRNA and methionyl-tRNAi to the 40S ribosome. The eIF-3 complex specifically targets and initiates translation of a subset of mRNAs involved in cell proliferation. In the eIF-3 complex, eif3d specifically recognizes and binds the 7-methylguanosine cap of a subset of mRNAs. In Drosophila simulans (Fruit fly), this protein is Eukaryotic translation initiation factor 3 subunit D-1.